The sequence spans 157 residues: uncharacterized protein (157 aa).

Helical transmembrane passes span 29–49 (LLIIPLLLLWGVSASFQPAYF), 52–72 (VLHVAISGILLLIGLACGFGI), 93–113 (LGSVILILVILSLRMAARTWL), and 117–137 (NEMFIAIIHSMFFVPLGTITA).

Its subcellular location is the cell membrane. This is an uncharacterized protein from Bacillus subtilis (strain 168).